The chain runs to 218 residues: Cell division protein SepF (218 aa).

Residues 20–81 (DDEYYDDRAP…GYRGGYADEP (62 aa)) are disordered. Over residues 36-65 (PRFDDDYGRYDGRDYDDARSDSRGDLRGEP) the composition is skewed to basic and acidic residues.

Belongs to the SepF family. In terms of assembly, homodimer. Interacts with FtsZ.

It is found in the cytoplasm. Cell division protein that is part of the divisome complex and is recruited early to the Z-ring. Probably stimulates Z-ring formation, perhaps through the cross-linking of FtsZ protofilaments. Its function overlaps with FtsA. The polypeptide is Cell division protein SepF (Mycobacterium bovis (strain ATCC BAA-935 / AF2122/97)).